The primary structure comprises 311 residues: Solute carrier family 25 member 48 (311 aa).

Solcar repeat units lie at residues 3 to 86, 101 to 205, and 214 to 301; these read SFQL…TQRF, RTLS…LSEW, and PSPC…SLQA. 6 helical membrane-spanning segments follow: residues 9 to 29, 61 to 81, 107 to 127, 189 to 209, 217 to 237, and 277 to 295; these read FAAG…LDTV, GMSF…GVFS, LLAS…VDLI, VPGY…ITPE, CAVW…ATPM, and ITVN…FLGY.

Belongs to the mitochondrial carrier (TC 2.A.29) family.

It is found in the mitochondrion inner membrane. This chain is Solute carrier family 25 member 48 (SLC25A48), found in Homo sapiens (Human).